The sequence spans 171 residues: 3-hydroxydecanoyl-[acyl-carrier-protein] dehydratase (171 aa).

The active site involves His70.

The protein belongs to the thioester dehydratase family. FabA subfamily. In terms of assembly, homodimer.

It localises to the cytoplasm. The enzyme catalyses a (3R)-hydroxyacyl-[ACP] = a (2E)-enoyl-[ACP] + H2O. It catalyses the reaction (3R)-hydroxydecanoyl-[ACP] = (2E)-decenoyl-[ACP] + H2O. It carries out the reaction (2E)-decenoyl-[ACP] = (3Z)-decenoyl-[ACP]. It participates in lipid metabolism; fatty acid biosynthesis. Necessary for the introduction of cis unsaturation into fatty acids. Catalyzes the dehydration of (3R)-3-hydroxydecanoyl-ACP to E-(2)-decenoyl-ACP and then its isomerization to Z-(3)-decenoyl-ACP. Can catalyze the dehydratase reaction for beta-hydroxyacyl-ACPs with saturated chain lengths up to 16:0, being most active on intermediate chain length. This Shewanella frigidimarina (strain NCIMB 400) protein is 3-hydroxydecanoyl-[acyl-carrier-protein] dehydratase.